Consider the following 116-residue polypeptide: MPKRDIKAFLYDILSYMDDIINFTKDMDYEEFINNKAIKYAVIRCLEVIGEAVKKIPKDIREKYPHIPFKELAGMRDKLIHQYFGVDYLTVWETAKYEIPEIKKEFEKIIKDLEEK.

Catalysis depends on residues Arg-76 and His-81. The short motif at 76-83 (RDKLIHQY) is the RX(4)HXY motif element. O-di-AMP-tyrosine is present on Tyr-83.

The protein belongs to the HepT RNase toxin family. Homodimer, probably forms a complex with cognate antitoxin MJ0126. Post-translationally, modified by cognate antitoxin MJ0126; probably at least 2 successive AMPylation events occur on Tyr-83.

Its function is as follows. Probable toxic component of a putative type VII toxin-antitoxin (TA) system, probably an RNase. Probably neutralized by cognate antitoxin MJ0126. Neutralization may be due to AMPylation by MJ0126. In Methanocaldococcus jannaschii (strain ATCC 43067 / DSM 2661 / JAL-1 / JCM 10045 / NBRC 100440) (Methanococcus jannaschii), this protein is Putative RNase MJ0125.